Here is a 715-residue protein sequence, read N- to C-terminus: Glycine--tRNA ligase beta subunit (715 aa).

Belongs to the class-II aminoacyl-tRNA synthetase family. Tetramer of two alpha and two beta subunits.

The protein resides in the cytoplasm. The catalysed reaction is tRNA(Gly) + glycine + ATP = glycyl-tRNA(Gly) + AMP + diphosphate. The protein is Glycine--tRNA ligase beta subunit of Nitrosomonas eutropha (strain DSM 101675 / C91 / Nm57).